Consider the following 552-residue polypeptide: Scavenger receptor class B member 1 (552 aa).

Residues 1-11 (MGCSAKARWAA) are Cytoplasmic-facing. The helical transmembrane segment at 12–32 (GALGVAGLLCAVLGAVMIVMV) threads the bilayer. Topologically, residues 33–443 (PSLIKQQVLK…LVLMPKVMHY (411 aa)) are extracellular. N-linked (GlcNAc...) asparagine glycans are attached at residues Asn-102, Asn-108, Asn-173, Asn-212, Asn-227, Asn-255, Asn-310, Asn-330, and Asn-383. Cys-251 and Cys-384 are disulfide-bonded. Phosphoserine is present on residues Tyr-393 and Val-458. The chain crosses the membrane as a helical span at residues 444 to 464 (AQYVLLALGCVLLLVPVICQI). The S-palmitoyl cysteine moiety is linked to residue Cys-462. Over 465–552 (RSQVGAGQRA…GPSLGGGTGS (88 aa)) the chain is Cytoplasmic. Thr-493 is subject to Phosphoserine.

Belongs to the CD36 family. The C-terminal region binds to PDZK1. In terms of assembly, (Microbial infection) Interacts with hepatitis C virus E1:E2 glycoproteins. In terms of processing, N-glycosylated. The six cysteines of the extracellular domain are all involved in intramolecular disulfide bonds. In terms of tissue distribution, widely expressed.

It is found in the cell membrane. Its subcellular location is the membrane. The protein localises to the caveola. Functionally, receptor for different ligands such as phospholipids, cholesterol ester, lipoproteins, phosphatidylserine and apoptotic cells. Receptor for HDL, mediating selective uptake of cholesteryl ether and HDL-dependent cholesterol efflux. Also facilitates the flux of free and esterified cholesterol between the cell surface and apoB-containing lipoproteins and modified lipoproteins, although less efficiently than HDL. May be involved in the phagocytosis of apoptotic cells, via its phosphatidylserine binding activity. In terms of biological role, (Microbial infection) Acts as a receptor for hepatitis C virus in hepatocytes and appears to facilitate its cell entry. Binding between SCARB1 and the hepatitis C virus glycoprotein E2 is independent of the genotype of the viral isolate. (Microbial infection) Mediates uptake of M.fortuitum, E.coli and S.aureus. Its function is as follows. (Microbial infection) Facilitates the entry of human coronavirus SARS-CoV-2 by acting as an entry cofactor through HDL binding. This chain is Scavenger receptor class B member 1 (SCARB1), found in Homo sapiens (Human).